We begin with the raw amino-acid sequence, 727 residues long: 1,4-alpha-glucan branching enzyme GlgB (727 aa).

Asp411 (nucleophile) is an active-site residue. Glu464 (proton donor) is an active-site residue.

Belongs to the glycosyl hydrolase 13 family. GlgB subfamily. As to quaternary structure, monomer.

The catalysed reaction is Transfers a segment of a (1-&gt;4)-alpha-D-glucan chain to a primary hydroxy group in a similar glucan chain.. Its pathway is glycan biosynthesis; glycogen biosynthesis. Catalyzes the formation of the alpha-1,6-glucosidic linkages in glycogen by scission of a 1,4-alpha-linked oligosaccharide from growing alpha-1,4-glucan chains and the subsequent attachment of the oligosaccharide to the alpha-1,6 position. The protein is 1,4-alpha-glucan branching enzyme GlgB of Protochlamydia amoebophila (strain UWE25).